The chain runs to 377 residues: Mucin-7 (377 aa).

Residues 1-22 (MKTLPLFVCICALSACFSFSEG) form the signal peptide. Positions 70–100 (CRPKLPPSPNNPPKFPNPHQPPKHPDKNSSV) are disordered. Residues 73 to 89 (KLPPSPNNPPKFPNPHQ) show a composition bias toward pro residues. 4 N-linked (GlcNAc...) asparagine glycosylation sites follow: Asn97, Asn128, Asn135, and Asn146. The segment at 150–355 (SVATLAPVNS…QPTSAPGQNK (206 aa)) is disordered. 6 consecutive repeat copies span residues 165-187 (TTAA…APPE), 188-210 (TTAA…APPE), 211-233 (TTAA…APPE), 234-256 (TTAA…APPE), 257-279 (TTAV…APPE), and 280-302 (TTAA…APQE). Over residues 169–183 (PPTPSATTPAPPSSS) the composition is skewed to pro residues. Thr176 carries an O-linked (GalNAc) threonine; by GALNT13 glycan. Ser182 and Ser183 each carry an O-linked (GalNAc) serine; by GALNT13 glycan. Residues 184 to 214 (APPETTAAPPTPSATTQAPPSSSAPPETTAA) are compositionally biased toward low complexity. Residues Thr188 and Thr189 are each glycosylated (O-linked (GalNAc) threonine; by GALNT13). Residues 215–229 (PPTPPATTPAPPSSS) show a composition bias toward pro residues. Low complexity predominate over residues 230 to 283 (APPETTAAPPTPSATTPAPLSSSAPPETTAVPPTPSATTLDPSSASAPPETTAA). The segment covering 284–298 (PPTPSATTPAPPSSP) has biased composition (pro residues). Over residues 309-329 (TTPNSSPTTLAPDTSETSAAP) the composition is skewed to polar residues. A compositionally biased stretch (low complexity) spans 330–348 (THQTTTSVTTQTTTTKQPT).

As to quaternary structure, monomer. In terms of processing, N- and O-glycosylated. Contains fucose, mannose, galactose, N-acetylglucosamine and N-acetylgalactosamine. Expressed in salivary gland tissues and only in those that contain mucous acinar cells (e.g. sublingual and submandibular glands) and not in salivary glands containing only serous acinar cells (e.g. parotid gland).

It is found in the secreted. Its function is as follows. May function in a protective capacity by promoting the clearance of bacteria in the oral cavity and aiding in mastication, speech, and swallowing. Binds P.aeruginosa pili. This chain is Mucin-7 (MUC7), found in Homo sapiens (Human).